The following is a 416-amino-acid chain: MPESQIIELGTLGQIPLYSLERALQDPLRAVKLRRQIVSQHQATGNIDFTTDGSALPYEGYDYKAVLGACCENVIGYMPIPVGVAGPIKINGKMVFLPMSTTEGALVASTNRGCMAINAGGGVTALVLGDGMTRAPIVRFPSLEEAGAAKQWLGSDAGFLIIEDAFNASSRFARLQNIKATAVGSDLYIRFTASTGDAMGMNMISKGVEQALEAMQKHGFESMDVVSLSGNFCADKKPAAVNWIEGRGKTVTAQATIPEHAVRETLKTSVEALVELNVSKNLVGSAVAGALGGFNAHAANVVTAIYLATGQDPAQNVQSSNTLTVMKNVNGDLQISVFMPSIEVGTVGGGTVLGPQKAMLHMMGVQGADPEQPGRNAQELALLVAAGVLAGELSLCSALSAGSLVKSHLTHNRKKG.

The active-site Charge relay system is the glutamate 103. The N-linked (GlcNAc...) asparagine glycan is linked to asparagine 167. Lysine 236 acts as the Charge relay system in catalysis. Asparagine 277 carries N-linked (GlcNAc...) asparagine glycosylation. Catalysis depends on aspartate 312, which acts as the Charge relay system. The chain crosses the membrane as a helical span at residues 380 to 400 (LALLVAAGVLAGELSLCSALS). Histidine 408 functions as the Proton donor in the catalytic mechanism.

The protein belongs to the HMG-CoA reductase family.

The protein resides in the membrane. It carries out the reaction (R)-mevalonate + 2 NADP(+) + CoA = (3S)-3-hydroxy-3-methylglutaryl-CoA + 2 NADPH + 2 H(+). It participates in metabolic intermediate biosynthesis; (R)-mevalonate biosynthesis; (R)-mevalonate from acetyl-CoA: step 3/3. Its function is as follows. 3-hydroxy-3-methylglutaryl coenzyme A reductase; part of the gene cluster that mediates the biosynthesis of the diterpene ent-pimara-8(14),15-diene (PD). Within the cluster, the HMG-CoA reductase AN1593 functions in the mevalonate pathway, which produces isoprenoid precursors. The geranylgeranyl pyrophosphate (GGPP) synthase AN1592 is needed in the formation of GGPP, the precursor for diterpenes. Lastly, the pimaradiene synthase pbcA performs the 2 cyclization steps that convert GGPP to ent-pimara-8(14),15-diene. The putative roles of the remaining cluster enzymes in ent-pimara-8(14),15-diene biosynthesis is unclear. The cytochrome P450 monooxygenase AN1598, the glutathione S-transferase AN1595, the oxidoreductases AN1596 and AN1597 probably function as decorative enzymes. It is possible that in biological conditions the compound is oxidized to ent-pimara-8(14),15-dien-19-oic acid, which is a bioactive diterpene compound predominant in many plant extracts. This chain is 3-hydroxy-3-methylglutaryl coenzyme A reductase AN1593, found in Emericella nidulans (strain FGSC A4 / ATCC 38163 / CBS 112.46 / NRRL 194 / M139) (Aspergillus nidulans).